The sequence spans 603 residues: Glutathione-regulated potassium-efflux system protein KefB (603 aa).

Transmembrane regions (helical) follow at residues 5–25 (ALLTAGVLFLFVAVVAVPIAA), 29–49 (IGAVLGYLIAGIAIGPWGLGF), 55–75 (AILHFSELGVVFLMFIIGLEL), 87–107 (IFGVGAAQVGLSTLLLGGALY), 115–135 (SALIGGVGLAMSSTAMALQLM), 152–172 (VLLFQDLAVIPALALIPILAG), 180–202 (WERIGLKVAAFLGMLIGGRYLVR), 207–227 (FIAASGVREVFTAAALLLVLG), 230–250 (LFMETLGLSMALGTFIAGILL), 268–288 (GLLLGLFFISVGMALNLGILY), 291–311 (IVKIMVAVLVLVAVKAAVLYF), 326–346 (FAGVLSQGGEFAFVLFSAAAS), and 356–376 (PLLLVTVTLSMMTTPLLMQLI). Positions 400–521 (EPQVIVVGFG…VRHFSRETFS (122 aa)) constitute an RCK N-terminal domain.

The protein belongs to the monovalent cation:proton antiporter 2 (CPA2) transporter (TC 2.A.37) family. KefB subfamily. Interacts with the regulatory subunit KefG.

Its subcellular location is the cell inner membrane. In terms of biological role, pore-forming subunit of a potassium efflux system that confers protection against electrophiles. Catalyzes K(+)/H(+) antiport. This is Glutathione-regulated potassium-efflux system protein KefB from Pectobacterium carotovorum subsp. carotovorum (strain PC1).